A 393-amino-acid polypeptide reads, in one-letter code: Bifunctional chrysanthemol synthase, chloroplastic (393 aa).

The segment covering 1–18 (MACSSSLSSKWASWGASS) has biased composition (low complexity). Residues 1 to 22 (MACSSSLSSKWASWGASSRPHP) are disordered. The transit peptide at 1–53 (MACSSSLSSKWASWGASSRPHPSVQPFVTRKNVVRYHKPTSELSYSPLTTTLS) directs the protein to the chloroplast. 3 residues coordinate dimethylallyl diphosphate: lysine 99, arginine 102, and glutamine 137. Positions 144 and 148 each coordinate Mg(2+). 7 residues coordinate dimethylallyl diphosphate: arginine 153, arginine 154, lysine 241, glutamine 280, aspartate 287, lysine 297, and lysine 306.

This sequence belongs to the FPP/GGPP synthase family. The cofactor is Mg(2+). Restricted to glandular trichomes during achene maturation. Expressed in flowers and in both ray and disk florets.

It is found in the plastid. Its subcellular location is the chloroplast. It catalyses the reaction 2 dimethylallyl diphosphate = (R,R)-chrysanthemyl diphosphate + diphosphate. The enzyme catalyses (R,R)-chrysanthemyl diphosphate + H2O = (R,R)-chrysanthemol + diphosphate. The catalysed reaction is (R)-lavandulyl diphosphate + H2O = (R)-lavandulol + diphosphate. It functions in the pathway isoprenoid biosynthesis. In terms of biological role, component of the monoterpenoid pyrethrins biosynthesis; pyrethrins are widely used plant-derived pesticide. Catalyzes the condensation of two molecules of dimethylallyl diphosphate to produce chrysanthemyl diphosphate (CPP), a monoterpene with a non-head-to-tail or irregular c1'-2-3 linkage between isoprenoid units. In a second step, hydrolyzes the diphosphate moiety of CPP to form chrysanthemol. With a lower efficiency, can also converts dimethylallyl diphosphate into lavandulyl diphosphate (LPP), and subsequently LPP into lavandulol. The chain is Bifunctional chrysanthemol synthase, chloroplastic from Tanacetum cinerariifolium (Dalmatian daisy).